Consider the following 122-residue polypeptide: MIQPQTLLNVADNSGARELMCIRIIGAGNPRYAHIGDVIVAVIKEAVPNMPLERSEVIRAVIVRTCKELKRNNGIIIRYDDNAAVVIDQEGNPKGTRVFGAIPRELRQFNFTKIVSLAPEVL.

This sequence belongs to the universal ribosomal protein uL14 family. Part of the 50S ribosomal subunit.

The protein localises to the plastid. The protein resides in the chloroplast. Functionally, binds to 23S rRNA. The sequence is that of Large ribosomal subunit protein uL14c from Dioscorea elephantipes (Elephant's foot yam).